Reading from the N-terminus, the 119-residue chain is Succinate dehydrogenase assembly factor 2, mitochondrial (119 aa).

Belongs to the SDHAF2 family. As to quaternary structure, interacts with the flavoprotein subunit within the SDH catalytic dimer.

The protein resides in the mitochondrion matrix. Its function is as follows. Plays an essential role in the assembly of succinate dehydrogenase (SDH), an enzyme complex (also referred to as respiratory complex II) that is a component of both the tricarboxylic acid (TCA) cycle and the mitochondrial electron transport chain, and which couples the oxidation of succinate to fumarate with the reduction of ubiquinone (coenzyme Q) to ubiquinol. Required for flavinylation (covalent attachment of FAD) of the flavoprotein subunit of the SDH catalytic dimer. The protein is Succinate dehydrogenase assembly factor 2, mitochondrial of Caenorhabditis elegans.